Here is a 41-residue protein sequence, read N- to C-terminus: Fibrinogen beta chain (41 aa).

The disordered stretch occupies residues 1–41 (ADDYDDEVLPDARGHRPIDRKREELPSLRPAPPPISGGGYR). Y4 is subject to Sulfotyrosine. Residues 10–26 (PDARGHRPIDRKREELP) are compositionally biased toward basic and acidic residues. Positions 14-16 (GHR) are beta-chain polymerization, binding distal domain of another fibrin.

In terms of assembly, heterohexamer; disulfide linked. Contains 2 sets of 3 non-identical chains (alpha, beta and gamma). The 2 heterotrimers are in head to head conformation with the N-termini in a small central domain. Conversion of fibrinogen to fibrin is triggered by thrombin, which cleaves fibrinopeptides A and B from alpha and beta chains, and thus exposes the N-terminal polymerization sites responsible for the formation of the soft clot.

It is found in the secreted. In terms of biological role, cleaved by the protease thrombin to yield monomers which, together with fibrinogen alpha (FGA) and fibrinogen gamma (FGG), polymerize to form an insoluble fibrin matrix. Fibrin has a major function in hemostasis as one of the primary components of blood clots. In addition, functions during the early stages of wound repair to stabilize the lesion and guide cell migration during re-epithelialization. Was originally thought to be essential for platelet aggregation, based on in vitro studies using anticoagulated blood. However subsequent studies have shown that it is not absolutely required for thrombus formation in vivo. Enhances expression of SELP in activated platelets. Maternal fibrinogen is essential for successful pregnancy. Fibrin deposition is also associated with infection, where it protects against IFNG-mediated hemorrhage. May also facilitate the antibacterial immune response via both innate and T-cell mediated pathways. The polypeptide is Fibrinogen beta chain (FGB) (Oryctolagus cuniculus (Rabbit)).